Consider the following 267-residue polypeptide: 4,5-DOPA dioxygenase extradiol (267 aa).

Zn(2+)-binding residues include His9, His47, His168, and His222.

It belongs to the DODA-type extradiol aromatic ring-opening dioxygenase family. The cofactor is Zn(2+). It depends on Fe(2+) as a cofactor. As to expression, expressed in petals. Not detected in leaves, stems and roots.

The protein localises to the cytoplasm. The enzyme catalyses L-dopa + O2 = 4-(L-alanin-3-yl)-2-hydroxy-cis,cis-muconate 6-semialdehyde + H(+). The protein operates within pigment biosynthesis; betalain biosynthesis. Its function is as follows. Opens the cyclic ring of dihydroxy-phenylalanine (DOPA) between carbons 4 and 5, thus producing an unstable seco-DOPA that rearranges nonenzymatically to betalamic acid. Produces mainly (S)-betalamic acid. Required for the coloration of flowers. This chain is 4,5-DOPA dioxygenase extradiol (DOD), found in Mirabilis jalapa (Garden four-o'clock).